A 45-amino-acid polypeptide reads, in one-letter code: DVCDSLVGGRCIHNGCWCERSAPHGNCCNTSGCTATFWCPGTLFD.

Disulfide bonds link C3/C16, C11/C28, C18/C33, and C27/C39. A 6'-bromotryptophan modification is found at W17. P23 carries the post-translational modification 4-hydroxyproline. W38 is modified (6'-bromotryptophan). At P40 the chain carries 4-hydroxyproline.

In terms of tissue distribution, expressed by the venom duct.

It localises to the secreted. In terms of biological role, mu-conotoxins block voltage-gated sodium channels. This toxin reversibly blocks voltage-gated sodium channel in cephalopods, with no alteration in the voltage dependence of sodium conductance or on the kinetics of inactivation. In Californiconus californicus (California cone), this protein is Mu-conotoxin-like Cal 12.1.2e.